Consider the following 207-residue polypeptide: Ribosomal RNA small subunit methyltransferase G (207 aa).

S-adenosyl-L-methionine is bound by residues glycine 73, leucine 78, 124–125 (VE), and arginine 139.

The protein belongs to the methyltransferase superfamily. RNA methyltransferase RsmG family.

It is found in the cytoplasm. It catalyses the reaction guanosine(527) in 16S rRNA + S-adenosyl-L-methionine = N(7)-methylguanosine(527) in 16S rRNA + S-adenosyl-L-homocysteine. Its function is as follows. Specifically methylates the N7 position of guanine in position 527 of 16S rRNA. The protein is Ribosomal RNA small subunit methyltransferase G of Salmonella arizonae (strain ATCC BAA-731 / CDC346-86 / RSK2980).